Reading from the N-terminus, the 177-residue chain is von Ebner gland protein 2 (177 aa).

An N-terminal signal peptide occupies residues methionine 1–alanine 18. Cysteines 80 and 172 form a disulfide.

Belongs to the calycin superfamily. Lipocalin family. As to quaternary structure, homodimer.

The protein resides in the secreted. Could play a role in taste reception. Could be necessary for the concentration and delivery of sapid molecules in the gustatory system. The polypeptide is von Ebner gland protein 2 (Vegp2) (Rattus norvegicus (Rat)).